We begin with the raw amino-acid sequence, 31 residues long: Superoxide dismutase [Cu-Zn] (31 aa).

The protein belongs to the Cu-Zn superoxide dismutase family. Cu cation serves as cofactor. The cofactor is Zn(2+).

It is found in the cytoplasm. The catalysed reaction is 2 superoxide + 2 H(+) = H2O2 + O2. Destroys radicals which are normally produced within the cells and which are toxic to biological systems. The chain is Superoxide dismutase [Cu-Zn] from Striga hermonthica (Purple witchweed).